The primary structure comprises 308 residues: Putative hydrolase MT0526 (308 aa).

Positions 1 to 48 (MMVSSHLGSPDQAGHVDLASPADPPPPDASASHSPVDMPAPVAAAGSD) are disordered. Asp62 functions as the Nucleophile in the catalytic mechanism. Residues Asp62, Asp64, and Asp237 each contribute to the Mg(2+) site. The Proton donor role is filled by Asp64.

It belongs to the HAD-like hydrolase superfamily. SerB family. Requires Mg(2+) as cofactor.

In Mycobacterium tuberculosis (strain CDC 1551 / Oshkosh), this protein is Putative hydrolase MT0526.